The sequence spans 312 residues: Bifunctional pinoresinol-lariciresinol reductase 2 (312 aa).

Residues 11–17 (GGTGYIG), arginine 36, and lysine 45 contribute to the NADP(+) site. Lysine 138 serves as the catalytic Proton acceptor. Arginine 142 lines the NADP(+) pocket. Histidine 270 is a substrate binding site.

The protein belongs to the NmrA-type oxidoreductase family. Isoflavone reductase subfamily. As to quaternary structure, dimer.

It catalyses the reaction (+)-lariciresinol + NADP(+) = (+)-pinoresinol + NADPH + H(+). It carries out the reaction (-)-secoisolariciresinol + NADP(+) = (+)-lariciresinol + NADPH + H(+). The enzyme catalyses (-)-lariciresinol + NADP(+) = (-)-pinoresinol + NADPH + H(+). Reductase involved in lignan biosynthesis. Catalyzes the enantioselective sequential conversion of (+)-pinoresinol into (+)-lariciresinol and of (+)-lariciresinol into (-)-secoisolariciresinol. Can also convert with a lower efficiency (-)-pinoresinol into (-)-lariciresinol, but not (-)-lariciresinol into (+)-secoisolariciresinol. Abstracts the 4R-hydride from the NADPH cofactor during catalysis. This chain is Bifunctional pinoresinol-lariciresinol reductase 2 (PLR_Tp2), found in Thuja plicata (Western red-cedar).